The primary structure comprises 660 residues: Acetyl-coenzyme A synthetase (660 aa).

CoA is bound by residues 197-200 (RGGK) and Thr-317. Residues 397–399 (GEP), 421–426 (DTFWQT), Asp-512, and Arg-528 contribute to the ATP site. CoA is bound at residue Ser-536. An ATP-binding site is contributed by Arg-539. Mg(2+) is bound by residues Val-550 and Val-555. Lys-625 carries the post-translational modification N6-acetyllysine.

Belongs to the ATP-dependent AMP-binding enzyme family. It depends on Mg(2+) as a cofactor. Acetylated. Deacetylation by the SIR2-homolog deacetylase activates the enzyme.

The catalysed reaction is acetate + ATP + CoA = acetyl-CoA + AMP + diphosphate. Its function is as follows. Catalyzes the conversion of acetate into acetyl-CoA (AcCoA), an essential intermediate at the junction of anabolic and catabolic pathways. AcsA undergoes a two-step reaction. In the first half reaction, AcsA combines acetate with ATP to form acetyl-adenylate (AcAMP) intermediate. In the second half reaction, it can then transfer the acetyl group from AcAMP to the sulfhydryl group of CoA, forming the product AcCoA. This Ralstonia pickettii (strain 12J) protein is Acetyl-coenzyme A synthetase.